The following is a 185-amino-acid chain: Elongation factor P (185 aa).

Belongs to the elongation factor P family.

It localises to the cytoplasm. It functions in the pathway protein biosynthesis; polypeptide chain elongation. Functionally, involved in peptide bond synthesis. Stimulates efficient translation and peptide-bond synthesis on native or reconstituted 70S ribosomes in vitro. Probably functions indirectly by altering the affinity of the ribosome for aminoacyl-tRNA, thus increasing their reactivity as acceptors for peptidyl transferase. In Streptococcus pyogenes serotype M4 (strain MGAS10750), this protein is Elongation factor P.